The primary structure comprises 107 residues: Putative double-stranded DNA mimic protein YpsIP31758_1954 (107 aa).

It belongs to the putative dsDNA mimic protein family.

May act as a double-stranded DNA (dsDNA) mimic. Probably regulates the activity of a dsDNA-binding protein. The protein is Putative double-stranded DNA mimic protein YpsIP31758_1954 of Yersinia pseudotuberculosis serotype O:1b (strain IP 31758).